The chain runs to 506 residues: RNA-splicing ligase RtcB homolog 1 (506 aa).

Residues Asp-120, Cys-123, His-228, His-260, and His-354 each contribute to the Mn(2+) site. 227–231 (NHYAE) is a GMP binding site. Residues 354 to 355 (HN), 403 to 406 (GGSM), Ser-410, 429 to 432 (HGAG), and Lys-505 each bind GMP. The active-site GMP-histidine intermediate is His-429.

The protein belongs to the RtcB family. As to quaternary structure, catalytic component of the tRNA-splicing ligase complex. The cofactor is Mn(2+).

The enzyme catalyses a 3'-end 3'-phospho-ribonucleotide-RNA + a 5'-end dephospho-ribonucleoside-RNA + GTP = a ribonucleotidyl-ribonucleotide-RNA + GMP + diphosphate. It carries out the reaction a 3'-end 2',3'-cyclophospho-ribonucleotide-RNA + a 5'-end dephospho-ribonucleoside-RNA + GTP + H2O = a ribonucleotidyl-ribonucleotide-RNA + GMP + diphosphate + H(+). Catalytic subunit of the tRNA-splicing ligase complex that acts by directly joining spliced tRNA halves to mature-sized tRNAs by incorporating the precursor-derived splice junction phosphate into the mature tRNA as a canonical 3',5'-phosphodiester. May act as an RNA ligase with broad substrate specificity, and may function toward other RNAs. This is RNA-splicing ligase RtcB homolog 1 from Culex quinquefasciatus (Southern house mosquito).